The chain runs to 709 residues: Elongation factor G (709 aa).

A tr-type G domain is found at 10-286; the sequence is NKVRNIGIMA…AVVDFLPSPL (277 aa). GTP contacts are provided by residues 19-26, 83-87, and 137-140; these read AHIDAGKT, DTPGH, and NKMD.

This sequence belongs to the TRAFAC class translation factor GTPase superfamily. Classic translation factor GTPase family. EF-G/EF-2 subfamily.

Its subcellular location is the cytoplasm. Catalyzes the GTP-dependent ribosomal translocation step during translation elongation. During this step, the ribosome changes from the pre-translocational (PRE) to the post-translocational (POST) state as the newly formed A-site-bound peptidyl-tRNA and P-site-bound deacylated tRNA move to the P and E sites, respectively. Catalyzes the coordinated movement of the two tRNA molecules, the mRNA and conformational changes in the ribosome. This Corynebacterium glutamicum (strain R) protein is Elongation factor G.